Here is a 519-residue protein sequence, read N- to C-terminus: Cyclic AMP-responsive element-binding protein 3-like protein 1 (519 aa).

The interval Met-1–Asp-60 is required for transcriptional activation. The Cytoplasmic portion of the chain corresponds to Met-1–Thr-374. A disordered region spans residues Leu-71–Ser-98. Residues His-86–Gln-97 are compositionally biased toward polar residues. Lys-184 participates in a covalent cross-link: Glycyl lysine isopeptide (Lys-Gly) (interchain with G-Cter in SUMO2). The disordered stretch occupies residues Asp-200–Pro-259. A compositionally biased stretch (low complexity) spans Ser-210–Arg-223. Polar residues predominate over residues Arg-236–Leu-246. In terms of domain architecture, bZIP spans Ala-290 to Leu-353. The interval Lys-292–Lys-321 is basic motif. The tract at residues Leu-332–Leu-353 is leucine-zipper. A helical; Signal-anchor for type II membrane protein transmembrane segment spans residues Cys-375–Pro-395. An MBTPS2 recognition motif is present at residues Pro-392–Pro-395. Topologically, residues Glu-396–Ser-519 are lumenal. An MBTPS1 recognition motif is present at residues Arg-423–Leu-426. Residues Glu-484–Ser-519 are disordered. A glycan (N-linked (GlcNAc...) asparagine) is linked at Asn-492. The segment covering Ser-499–Leu-510 has biased composition (basic and acidic residues). Asn-513 is a glycosylation site (N-linked (GlcNAc...) asparagine).

It belongs to the bZIP family. ATF subfamily. As to quaternary structure, interacts with SMAD4, the interaction takes place upon TGFB1 induction and SMAD4 acts as a CREB3L1 coactivator to induce the expression of genes involved in assembly of collagen extracellular matrix. In terms of processing, upon ER stress or DNA damage, translocated to the Golgi apparatus, where it is processed by regulated intramembrane proteolysis (RIP) to release the cytosol-facing N-terminal transcription factor domain. The cleavage is performed sequentially by site-1 and site-2 proteases (S1P/MBTPS1 and S2P/MBTPS2). RIP is induced by TGFB1 and ceramide. Post-translationally, N-glycosylated. Ubiquitinated by HRD1/SYVN1; undergoes 'Lys-48'-linked ubiquitination, followed by rapid proteasomal degradation under normal conditions. Upon ER stress, SYVN1 E3 ubiquitin-protein ligase dissociates from its substrate, ubiquitination does not occur and CREB3L1 is stabilized. Expressed in several tissues, with highest levels in pancreas and prostate. Expressed at relatively lower levels in brain.

The protein localises to the endoplasmic reticulum membrane. It is found in the nucleus. Functionally, precursor of the transcription factor form (Processed cyclic AMP-responsive element-binding protein 3-like protein 1), which is embedded in the endoplasmic reticulum membrane with N-terminal DNA-binding and transcription activation domains oriented toward the cytosolic face of the membrane. In response to ER stress or DNA damage, transported to the Golgi, where it is cleaved in a site-specific manner by resident proteases S1P/MBTPS1 and S2P/MBTPS2. The released N-terminal cytosolic domain is translocated to the nucleus where it activates transcription of specific target genes involved in the cell-cycle progression inhibition. Its function is as follows. Transcription factor involved in cell type specific DNA damage and unfolded protein response (UPR). Binds the DNA consensus sequence 5'-GTGXGCXGC-3'. Plays a critical role in bone formation through the transcription of COL1A1, and possibly COL1A2, and the secretion of bone matrix proteins. Directly binds to the UPR element (UPRE)-like sequence in an osteoblast-specific COL1A1 promoter region and induces its transcription. Does not regulate COL1A1 in other tissues, such as skin. Required to protect astrocytes from ER stress-induced cell death. In astrocytes, binds to the cAMP response element (CRE) of the BiP/HSPA5 promoter and participate in its transcriptional activation. In astrocytes and osteoblasts, upon DNA damage, inhibits cell-cycle progression after G2/M phase by binding to promoters and activating transcription of genes encoding cell-cycle inhibitors, such as p21/CDKN1A. Required for TGFB1 to activate genes involved in the assembly of collagen extracellular matrix. (Microbial infection) May play a role in limiting virus spread by inhibiting proliferation of virus-infected cells. Upon infection with diverse DNA and RNA viruses, inhibits cell-cycle progression by binding to promoters and activating transcription of genes encoding cell-cycle inhibitors, such as p21/CDKN1A. The protein is Cyclic AMP-responsive element-binding protein 3-like protein 1 of Homo sapiens (Human).